The following is an 88-amino-acid chain: UPF0297 protein SSU98_0066 (88 aa).

This sequence belongs to the UPF0297 family.

This chain is UPF0297 protein SSU98_0066, found in Streptococcus suis (strain 98HAH33).